The chain runs to 201 residues: Retinol-binding protein 4 (201 aa).

A signal peptide spans 1–18 (MEWVWALVLLAALGSAQA). Cystine bridges form between cysteine 22-cysteine 178, cysteine 88-cysteine 192, and cysteine 138-cysteine 147. Residue glutamine 116 participates in substrate binding. Arginine 139 is subject to Omega-N-methylarginine.

It belongs to the calycin superfamily. Lipocalin family. Interacts with TTR. Interaction with TTR prevents its loss by filtration through the kidney glomeruli. Interacts with STRA6.

The protein localises to the secreted. Retinol-binding protein that mediates retinol transport in blood plasma. Delivers retinol from the liver stores to the peripheral tissues. Transfers the bound all-trans retinol to STRA6, that then facilitates retinol transport across the cell membrane. The sequence is that of Retinol-binding protein 4 (RBP4) from Sus scrofa (Pig).